The primary structure comprises 528 residues: Phosphoenolpyruvate carboxykinase (ATP) (528 aa).

3 residues coordinate substrate: Arg-56, Tyr-192, and Lys-198. ATP-binding positions include Lys-198, His-217, and 233–241 (GLSGTGKTT). Positions 198 and 217 each coordinate Mn(2+). Position 254 (Asp-254) interacts with Mn(2+). Residues Glu-282, Arg-319, and Thr-444 each contribute to the ATP site. A substrate-binding site is contributed by Arg-319.

It belongs to the phosphoenolpyruvate carboxykinase (ATP) family. It depends on Mn(2+) as a cofactor.

It is found in the cytoplasm. The enzyme catalyses oxaloacetate + ATP = phosphoenolpyruvate + ADP + CO2. The protein operates within carbohydrate biosynthesis; gluconeogenesis. In terms of biological role, involved in the gluconeogenesis. Catalyzes the conversion of oxaloacetate (OAA) to phosphoenolpyruvate (PEP) through direct phosphoryl transfer between the nucleoside triphosphate and OAA. This chain is Phosphoenolpyruvate carboxykinase (ATP), found in Geobacillus thermodenitrificans (strain NG80-2).